A 168-amino-acid chain; its full sequence is Phosphopantetheine adenylyltransferase (168 aa).

A substrate-binding site is contributed by Thr-10. ATP-binding positions include 10 to 11 and His-18; that span reads TF. Positions 42, 74, and 88 each coordinate substrate. Residues 89-91, Glu-99, and 124-130 contribute to the ATP site; these read GLR and NSFISST.

It belongs to the bacterial CoaD family. In terms of assembly, homohexamer. Requires Mg(2+) as cofactor.

The protein localises to the cytoplasm. The catalysed reaction is (R)-4'-phosphopantetheine + ATP + H(+) = 3'-dephospho-CoA + diphosphate. Its pathway is cofactor biosynthesis; coenzyme A biosynthesis; CoA from (R)-pantothenate: step 4/5. In terms of biological role, reversibly transfers an adenylyl group from ATP to 4'-phosphopantetheine, yielding dephospho-CoA (dPCoA) and pyrophosphate. This is Phosphopantetheine adenylyltransferase from Shewanella frigidimarina (strain NCIMB 400).